We begin with the raw amino-acid sequence, 548 residues long: T-complex protein 1 subunit theta (548 aa).

Alanine 2 carries the post-translational modification N-acetylalanine. At serine 23 the chain carries Phosphoserine. Tyrosine 30 is modified (phosphotyrosine). Tyrosine 47 and glycine 48 together coordinate ADP. Aspartate 99 serves as a coordination point for Mg(2+). 4 residues coordinate ADP: glycine 100, threonine 101, asparagine 102, and phenylalanine 103. ATP-binding residues include glycine 100, threonine 101, and asparagine 102. Serine 162 carries the phosphoserine modification. ADP contacts are provided by methionine 169, serine 170, and lysine 171. The ATP site is built by serine 170 and lysine 171. Glycyl lysine isopeptide (Lys-Gly) (interchain with G-Cter in SUMO2) cross-links involve residues lysine 224, lysine 254, and lysine 260. A phosphoserine mark is found at serine 269 and serine 317. Lysine 318 and lysine 400 each carry N6-acetyllysine. Glycine 412 is an ADP binding site. Glycine 412 is an ATP binding site. Lysine 459 is covalently cross-linked (Glycyl lysine isopeptide (Lys-Gly) (interchain with G-Cter in SUMO1)). The residue at position 466 (lysine 466) is an N6-acetyllysine. Aspartate 499 contributes to the ADP binding site. ATP-binding residues include aspartate 499 and lysine 504. Tyrosine 505 carries the phosphotyrosine modification. The interval 529 to 548 (PAGGPKPPSGKKDWDDDQND) is disordered. Residue lysine 534 forms a Glycyl lysine isopeptide (Lys-Gly) (interchain with G-Cter in SUMO2) linkage. Serine 537 bears the Phosphoserine mark. Lysine 539 is covalently cross-linked (Glycyl lysine isopeptide (Lys-Gly) (interchain with G-Cter in SUMO2)).

This sequence belongs to the TCP-1 chaperonin family. Component of the chaperonin-containing T-complex (TRiC), a hexadecamer composed of two identical back-to-back stacked rings enclosing a protein folding chamber. Each ring is made up of eight different subunits: TCP1/CCT1, CCT2, CCT3, CCT4, CCT5, CCT6A/CCT6, CCT7, CCT8. Interacts with PACRG. Interacts with DNAAF4. Interacts with synaptic plasticity regulator PANTS.

Its subcellular location is the cytoplasm. It localises to the cytoskeleton. The protein localises to the microtubule organizing center. The protein resides in the centrosome. It is found in the cilium basal body. The catalysed reaction is ATP + H2O = ADP + phosphate + H(+). Its function is as follows. Component of the chaperonin-containing T-complex (TRiC), a molecular chaperone complex that assists the folding of actin, tubulin and other proteins upon ATP hydrolysis. The TRiC complex mediates the folding of WRAP53/TCAB1, thereby regulating telomere maintenance. As part of the TRiC complex may play a role in the assembly of BBSome, a complex involved in ciliogenesis regulating transports vesicles to the cilia. The polypeptide is T-complex protein 1 subunit theta (Cct8) (Mus musculus (Mouse)).